Consider the following 197-residue polypeptide: MLTLVRQSLVVTLLLAALLCGAYPVLVTGAAQALLPGKANGSPVMVDGRVTGSDLIGQHFTGAGYFHGRPSAAGEDGYDASASGGSNLGPTSRTLAEAMQARADALRAENPDWKAPLPPDMVTASASGLDPHVSPQGAAMQVARVAAARGLPIKSVARLVEEHVEGPQLGLFGEPHVNVLRLNLALDALAGGRAEGN.

The helical transmembrane segment at 9 to 29 (LVVTLLLAALLCGAYPVLVTG) threads the bilayer.

Belongs to the KdpC family. In terms of assembly, the system is composed of three essential subunits: KdpA, KdpB and KdpC.

It localises to the cell inner membrane. In terms of biological role, part of the high-affinity ATP-driven potassium transport (or Kdp) system, which catalyzes the hydrolysis of ATP coupled with the electrogenic transport of potassium into the cytoplasm. This subunit acts as a catalytic chaperone that increases the ATP-binding affinity of the ATP-hydrolyzing subunit KdpB by the formation of a transient KdpB/KdpC/ATP ternary complex. This chain is Potassium-transporting ATPase KdpC subunit, found in Nitratidesulfovibrio vulgaris (strain DSM 19637 / Miyazaki F) (Desulfovibrio vulgaris).